The sequence spans 237 residues: Cysteine-rich venom protein DIS3 (237 aa).

The N-terminal stretch at 1-18 is a signal peptide; that stretch reads MFVFILLSLAAVLQQSFG. One can recognise an SCP domain in the interval 37 to 165; sequence VDKHNAFRRS…SYDYFYVCQY (129 aa). 7 disulfides stabilise this stretch: Cys-74/Cys-152, Cys-91/Cys-166, Cys-147/Cys-163, Cys-185/Cys-192, Cys-188/Cys-197, Cys-201/Cys-234, and Cys-219/Cys-232. Residues 201–234 form the ShKT domain; that stretch reads CSREDVFTNCKSLVAKSNCQDDYIRKNCLATCFC.

The protein belongs to the CRISP family. In terms of tissue distribution, expressed by the venom gland.

It localises to the secreted. Its function is as follows. Weakly blocks contraction of smooth muscle elicited by high potassium-induced depolarization, but does not block caffeine-stimulated contraction. May target voltage-gated calcium channels on smooth muscle. This is Cysteine-rich venom protein DIS3 from Dispholidus typus (Boomslang).